The sequence spans 279 residues: 5'-nucleotidase SurE 1 (279 aa).

4 residues coordinate a divalent metal cation: Asp12, Asp13, Ser45, and Asn103.

The protein belongs to the SurE nucleotidase family. It depends on a divalent metal cation as a cofactor.

The protein resides in the cytoplasm. The enzyme catalyses a ribonucleoside 5'-phosphate + H2O = a ribonucleoside + phosphate. Nucleotidase that shows phosphatase activity on nucleoside 5'-monophosphates. This chain is 5'-nucleotidase SurE 1, found in Chlamydia caviae (strain ATCC VR-813 / DSM 19441 / 03DC25 / GPIC) (Chlamydophila caviae).